The chain runs to 632 residues: Probable potassium transport system protein Kup (632 aa).

12 helical membrane passes run Leu-19–Leu-39, Ile-59–Val-79, Leu-110–Pro-130, Pro-146–Ile-166, Phe-178–Val-198, Leu-221–Tyr-241, Trp-256–Leu-276, Met-298–Phe-318, Ile-346–Phe-366, Ala-375–Met-395, Pro-403–Ala-423, and Ile-428–Thr-448.

This sequence belongs to the HAK/KUP transporter (TC 2.A.72) family.

It localises to the cell inner membrane. The catalysed reaction is K(+)(in) + H(+)(in) = K(+)(out) + H(+)(out). Its function is as follows. Transport of potassium into the cell. Likely operates as a K(+):H(+) symporter. The protein is Probable potassium transport system protein Kup of Cupriavidus metallidurans (strain ATCC 43123 / DSM 2839 / NBRC 102507 / CH34) (Ralstonia metallidurans).